The sequence spans 410 residues: Multifunctional CCA protein (410 aa).

ATP contacts are provided by Gly-8 and Arg-11. CTP contacts are provided by Gly-8 and Arg-11. Residues Asp-21 and Asp-23 each coordinate Mg(2+). ATP is bound by residues Arg-91, Arg-138, and Arg-141. CTP contacts are provided by Arg-91, Arg-138, and Arg-141. Positions 229 to 347 (TGVHQEMVSD…AQLALVCEAD (119 aa)) constitute an HD domain.

The protein belongs to the tRNA nucleotidyltransferase/poly(A) polymerase family. Bacterial CCA-adding enzyme type 1 subfamily. As to quaternary structure, monomer. Can also form homodimers and oligomers. Mg(2+) serves as cofactor. It depends on Ni(2+) as a cofactor.

The catalysed reaction is a tRNA precursor + 2 CTP + ATP = a tRNA with a 3' CCA end + 3 diphosphate. It carries out the reaction a tRNA with a 3' CCA end + 2 CTP + ATP = a tRNA with a 3' CCACCA end + 3 diphosphate. In terms of biological role, catalyzes the addition and repair of the essential 3'-terminal CCA sequence in tRNAs without using a nucleic acid template. Adds these three nucleotides in the order of C, C, and A to the tRNA nucleotide-73, using CTP and ATP as substrates and producing inorganic pyrophosphate. tRNA 3'-terminal CCA addition is required both for tRNA processing and repair. Also involved in tRNA surveillance by mediating tandem CCA addition to generate a CCACCA at the 3' terminus of unstable tRNAs. While stable tRNAs receive only 3'-terminal CCA, unstable tRNAs are marked with CCACCA and rapidly degraded. The polypeptide is Multifunctional CCA protein (Xanthomonas campestris pv. campestris (strain B100)).